The following is a 231-amino-acid chain: Orotidine 5'-phosphate decarboxylase (231 aa).

Residues D11, K33, 60–69, T117, R178, Q187, G207, and R208 contribute to the substrate site; that span reads DLKFHDIPNT. K62 serves as the catalytic Proton donor.

The protein belongs to the OMP decarboxylase family. Type 1 subfamily. In terms of assembly, homodimer.

It catalyses the reaction orotidine 5'-phosphate + H(+) = UMP + CO2. It functions in the pathway pyrimidine metabolism; UMP biosynthesis via de novo pathway; UMP from orotate: step 2/2. Functionally, catalyzes the decarboxylation of orotidine 5'-monophosphate (OMP) to uridine 5'-monophosphate (UMP). This is Orotidine 5'-phosphate decarboxylase from Nitrosomonas eutropha (strain DSM 101675 / C91 / Nm57).